Consider the following 530-residue polypeptide: uncharacterized protein (530 aa).

Positions 362–408 are disordered; the sequence is NLTPKLNKTNEDIKSDSTSQPQGFPEGNRRVMENPETKVSKTDDEEM. Residues 388 to 403 show a composition bias toward basic and acidic residues; that stretch reads GNRRVMENPETKVSKT.

It belongs to the IIV-6 030L family.

This is an uncharacterized protein from Invertebrate iridescent virus 6 (IIV-6).